An 88-amino-acid chain; its full sequence is Small ribosomal subunit protein uS15c (88 aa).

It belongs to the universal ribosomal protein uS15 family. In terms of assembly, part of the 30S ribosomal subunit.

Its subcellular location is the plastid. The protein localises to the chloroplast. In Physcomitrium patens (Spreading-leaved earth moss), this protein is Small ribosomal subunit protein uS15c (rps15).